The sequence spans 605 residues: NADH-ubiquinone oxidoreductase chain 5 (605 aa).

15 helical membrane-spanning segments follow: residues 8 to 28, 34 to 54, 87 to 107, 117 to 137, 140 to 160, 171 to 191, 241 to 261, 273 to 293, 301 to 321, 324 to 344, 366 to 386, 409 to 429, 457 to 477, 482 to 502, and 584 to 604; these read TLLS…YPYT, IYVK…TMIF, MILM…SMWY, FFKY…ANNL, LFIG…WWYG, AILY…WFLF, TPVS…FLLI, IQTM…ICAL, IVAF…GINQ, LAFL…LCSG, LPFT…MPFL, LFIT…IIYF, LLVG…PTTI, MPTY…IVAL, and IKLY…MLNF.

Belongs to the complex I subunit 5 family. In terms of assembly, core subunit of respiratory chain NADH dehydrogenase (Complex I) which is composed of 45 different subunits.

Its subcellular location is the mitochondrion inner membrane. The enzyme catalyses a ubiquinone + NADH + 5 H(+)(in) = a ubiquinol + NAD(+) + 4 H(+)(out). Core subunit of the mitochondrial membrane respiratory chain NADH dehydrogenase (Complex I) which catalyzes electron transfer from NADH through the respiratory chain, using ubiquinone as an electron acceptor. Essential for the catalytic activity and assembly of complex I. This is NADH-ubiquinone oxidoreductase chain 5 (MT-ND5) from Rousettus amplexicaudatus (Common rousette).